Consider the following 557-residue polypeptide: Dihydroxy-acid dehydratase (557 aa).

Cys-49 is a binding site for [2Fe-2S] cluster. Position 81 (Asp-81) interacts with Mg(2+). Cys-122 serves as a coordination point for [2Fe-2S] cluster. Mg(2+) contacts are provided by Asp-123 and Lys-124. Position 124 is an N6-carboxylysine (Lys-124). Cys-194 lines the [2Fe-2S] cluster pocket. Glu-446 is a binding site for Mg(2+). Residue Ser-472 is the Proton acceptor of the active site.

The protein belongs to the IlvD/Edd family. In terms of assembly, homodimer. [2Fe-2S] cluster is required as a cofactor. The cofactor is Mg(2+).

It carries out the reaction (2R)-2,3-dihydroxy-3-methylbutanoate = 3-methyl-2-oxobutanoate + H2O. It catalyses the reaction (2R,3R)-2,3-dihydroxy-3-methylpentanoate = (S)-3-methyl-2-oxopentanoate + H2O. The protein operates within amino-acid biosynthesis; L-isoleucine biosynthesis; L-isoleucine from 2-oxobutanoate: step 3/4. It functions in the pathway amino-acid biosynthesis; L-valine biosynthesis; L-valine from pyruvate: step 3/4. In terms of biological role, functions in the biosynthesis of branched-chain amino acids. Catalyzes the dehydration of (2R,3R)-2,3-dihydroxy-3-methylpentanoate (2,3-dihydroxy-3-methylvalerate) into 2-oxo-3-methylpentanoate (2-oxo-3-methylvalerate) and of (2R)-2,3-dihydroxy-3-methylbutanoate (2,3-dihydroxyisovalerate) into 2-oxo-3-methylbutanoate (2-oxoisovalerate), the penultimate precursor to L-isoleucine and L-valine, respectively. The chain is Dihydroxy-acid dehydratase from Prochlorococcus marinus (strain MIT 9312).